We begin with the raw amino-acid sequence, 108 residues long: Large ribosomal subunit protein uL24 (108 aa).

The interval 46-65 (RHTRVQQSSRGSQSGGIVTQ) is disordered. The span at 51–61 (QQSSRGSQSGG) shows a compositional bias: low complexity.

This sequence belongs to the universal ribosomal protein uL24 family. As to quaternary structure, part of the 50S ribosomal subunit.

One of two assembly initiator proteins, it binds directly to the 5'-end of the 23S rRNA, where it nucleates assembly of the 50S subunit. Its function is as follows. One of the proteins that surrounds the polypeptide exit tunnel on the outside of the subunit. In Parafrankia sp. (strain EAN1pec), this protein is Large ribosomal subunit protein uL24.